The following is a 121-amino-acid chain: Neuromedin-B (121 aa).

An N-terminal signal peptide occupies residues 1–24; the sequence is MTLRAVGVRLLGGLLLFALLAAGA. Methionine 56 bears the Methionine amide mark. Residues 60 to 121 constitute a propeptide that is removed on maturation; that stretch reads SLEPPSPSLL…RRLLVQTLQK (62 aa). The disordered stretch occupies residues 61-80; sequence LEPPSPSLLGTAPHTSLRDQ.

Belongs to the bombesin/neuromedin-B/ranatensin family.

It is found in the secreted. The protein resides in the cell projection. Its subcellular location is the neuron projection. Its function is as follows. Stimulates smooth muscle contraction. Induces sighing by acting directly on the pre-Botzinger complex, a cluster of several thousand neurons in the ventrolateral medulla responsible for inspiration during respiratory activity. Contributes to the induction of sneezing following exposure to chemical irritants or allergens which causes release of NMB by nasal sensory neurons and activation of NMBR-expressing neurons in the sneeze-evoking region of the brainstem. These in turn activate neurons of the caudal ventral respiratory group, giving rise to the sneezing response. Contributes to induction of acute itch, possibly through activation of the NMBR receptor on dorsal root ganglion neurons. Increases expression of NMBR and steroidogenic mediators STAR, CYP11A1 and HSD3B1 in Leydig cells, induces secretion of testosterone by Leydig cells and also promotes Leydig cell proliferation. Plays a role in the innate immune response to influenza A virus infection by enhancing interferon alpha expression and reducing expression of IL6. Plays a role in CSF1-induced proliferation of osteoclast precursors by contributing to the positive regulation of the expression of the CSF1 receptor CSF1R. The protein is Neuromedin-B (NMB) of Bos taurus (Bovine).